A 400-amino-acid polypeptide reads, in one-letter code: Glycerol-3-phosphate dehydrogenase [NAD(+)] 1 (400 aa).

Residues 50–55 (GSGNWG), Phe-138, Lys-161, and Ala-194 contribute to the NAD(+) site. Residue Lys-161 coordinates substrate. The active-site Proton acceptor is Lys-254. 2 residues coordinate NAD(+): Arg-319 and Gln-348. A substrate-binding site is contributed by 319–320 (RN).

Belongs to the NAD-dependent glycerol-3-phosphate dehydrogenase family.

The catalysed reaction is sn-glycerol 3-phosphate + NAD(+) = dihydroxyacetone phosphate + NADH + H(+). The protein is Glycerol-3-phosphate dehydrogenase [NAD(+)] 1 (GPD1) of Candida glabrata (strain ATCC 2001 / BCRC 20586 / JCM 3761 / NBRC 0622 / NRRL Y-65 / CBS 138) (Yeast).